The chain runs to 288 residues: Small ribosomal subunit protein uS3 (288 aa).

Residues 38–106 form the KH type-2 domain; sequence IRRMMSKGLE…QVQLNIIEVK (69 aa). Positions 209–288 are disordered; it reads PGRETPAEAP…TQPAETQQEG (80 aa). A compositionally biased stretch (basic and acidic residues) spans 219–232; sequence SRPRRERGDRSERP. Residues 249–264 show a composition bias toward low complexity; the sequence is AGRAAATTIAQAAETP. Positions 277 to 288 are enriched in polar residues; it reads AATQPAETQQEG.

This sequence belongs to the universal ribosomal protein uS3 family. As to quaternary structure, part of the 30S ribosomal subunit. Forms a tight complex with proteins S10 and S14.

In terms of biological role, binds the lower part of the 30S subunit head. Binds mRNA in the 70S ribosome, positioning it for translation. This chain is Small ribosomal subunit protein uS3, found in Salinispora arenicola (strain CNS-205).